A 566-amino-acid chain; its full sequence is Proline--tRNA ligase (566 aa).

This sequence belongs to the class-II aminoacyl-tRNA synthetase family. ProS type 1 subfamily. In terms of assembly, homodimer.

Its subcellular location is the cytoplasm. The catalysed reaction is tRNA(Pro) + L-proline + ATP = L-prolyl-tRNA(Pro) + AMP + diphosphate. In terms of biological role, catalyzes the attachment of proline to tRNA(Pro) in a two-step reaction: proline is first activated by ATP to form Pro-AMP and then transferred to the acceptor end of tRNA(Pro). As ProRS can inadvertently accommodate and process non-cognate amino acids such as alanine and cysteine, to avoid such errors it has two additional distinct editing activities against alanine. One activity is designated as 'pretransfer' editing and involves the tRNA(Pro)-independent hydrolysis of activated Ala-AMP. The other activity is designated 'posttransfer' editing and involves deacylation of mischarged Ala-tRNA(Pro). The misacylated Cys-tRNA(Pro) is not edited by ProRS. The polypeptide is Proline--tRNA ligase (Staphylococcus haemolyticus (strain JCSC1435)).